A 509-amino-acid polypeptide reads, in one-letter code: Cytochrome P450 monooxygenase aba1 (509 aa).

Residues 1-31 form the signal peptide; sequence MSNSILNLGSFACLLSLGSIVLWYTISAVLA. Asn402 is a glycosylation site (N-linked (GlcNAc...) asparagine). A heme-binding site is contributed by Cys451. Residue Asn462 is glycosylated (N-linked (GlcNAc...) asparagine).

It belongs to the cytochrome P450 family. The cofactor is heme.

It functions in the pathway hormone biosynthesis. In terms of biological role, cytochrome P450 monooxygenase; part of the gene cluster that mediates the biosynthesis of abscisic acid (ABA), a phytohormone that acts antagonistically toward salicylic acid (SA), jasmonic acid (JA) and ethylene (ETH) signaling, to impede plant defense responses. The first step of the pathway catalyzes the reaction from farnesyl diphosphate to alpha-ionylideneethane performed by the alpha-ionylideneethane synthase aba3 via a three-step reaction mechanism involving 2 neutral intermediates, beta-farnesene and allofarnesene. The cytochrome P450 monooxygenase aba1 might then be involved in the conversion of alpha-ionylideneethane to alpha-ionylideneacetic acid. Alpha-ionylideneacetic acid is further converted to abscisic acid in 2 steps involving the cytochrome P450 monooxygenase aba2 and the short-chain dehydrogenase/reductase aba4, via the intermediates 1'-deoxy-ABA or 1',4'-trans-diol-ABA, depending on the order of action of these 2 enzymes. Aba2 is responsible for the hydroxylation of carbon atom C-1' and aba4 might be involved in the oxidation of the C-4' carbon atom. The chain is Cytochrome P450 monooxygenase aba1 (aba1) from Botryotinia fuckeliana (strain B05.10) (Noble rot fungus).